Reading from the N-terminus, the 294-residue chain is Eukaryotic translation initiation factor 3 subunit G (294 aa).

Disordered stretches follow at residues 1 to 43 and 160 to 211; these read MPSA…ENKI and EDDG…RDET. The span at 194 to 211 shows a compositional bias: basic and acidic residues; sequence GANRRGETMPSRSQRDET. Positions 212-290 constitute an RRM domain; the sequence is ATIRVTNLSE…LILNVEWAKP (79 aa).

The protein belongs to the eIF-3 subunit G family. In terms of assembly, component of the eukaryotic translation initiation factor 3 (eIF-3) complex.

The protein localises to the cytoplasm. Functionally, RNA-binding component of the eukaryotic translation initiation factor 3 (eIF-3) complex, which is involved in protein synthesis of a specialized repertoire of mRNAs and, together with other initiation factors, stimulates binding of mRNA and methionyl-tRNAi to the 40S ribosome. The eIF-3 complex specifically targets and initiates translation of a subset of mRNAs involved in cell proliferation. This subunit can bind 18S rRNA. The sequence is that of Eukaryotic translation initiation factor 3 subunit G from Nematostella vectensis (Starlet sea anemone).